The following is a 278-amino-acid chain: Large ribosomal subunit protein uL2c (278 aa).

The segment at 224-267 is disordered; sequence VVMNPVDHPHGGGEGRAPIGRKKPLTPWGHTALGGRSRKNHKYS.

Belongs to the universal ribosomal protein uL2 family. As to quaternary structure, part of the 50S ribosomal subunit.

Its subcellular location is the plastid. The protein resides in the chloroplast. The polypeptide is Large ribosomal subunit protein uL2c (rpl2) (Huperzia lucidula (Shining clubmoss)).